Reading from the N-terminus, the 363-residue chain is Uroporphyrinogen decarboxylase (363 aa).

Substrate is bound by residues 27–31 (RQAGR), D77, Y157, T212, and H333.

Belongs to the uroporphyrinogen decarboxylase family. As to quaternary structure, homodimer.

It localises to the cytoplasm. It carries out the reaction uroporphyrinogen III + 4 H(+) = coproporphyrinogen III + 4 CO2. Its pathway is porphyrin-containing compound metabolism; protoporphyrin-IX biosynthesis; coproporphyrinogen-III from 5-aminolevulinate: step 4/4. In terms of biological role, catalyzes the decarboxylation of four acetate groups of uroporphyrinogen-III to yield coproporphyrinogen-III. This is Uroporphyrinogen decarboxylase from Cupriavidus necator (strain ATCC 17699 / DSM 428 / KCTC 22496 / NCIMB 10442 / H16 / Stanier 337) (Ralstonia eutropha).